The chain runs to 430 residues: Ribosomal protein uS12 methylthiotransferase RimO (430 aa).

The 117-residue stretch at 2–118 (AKIFTISLGC…IDNVIKRPKH (117 aa)) folds into the MTTase N-terminal domain. 6 residues coordinate [4Fe-4S] cluster: C11, C47, C81, C150, C154, and C157. The Radical SAM core domain occupies 136–368 (LTAPHSAYLK…AQSRVIDSIN (233 aa)). One can recognise a TRAM domain in the interval 369–430 (RKLKGKTVKV…KGYNRTGKII (62 aa)).

This sequence belongs to the methylthiotransferase family. RimO subfamily. Requires [4Fe-4S] cluster as cofactor.

The protein resides in the cytoplasm. It carries out the reaction L-aspartate(89)-[ribosomal protein uS12]-hydrogen + (sulfur carrier)-SH + AH2 + 2 S-adenosyl-L-methionine = 3-methylsulfanyl-L-aspartate(89)-[ribosomal protein uS12]-hydrogen + (sulfur carrier)-H + 5'-deoxyadenosine + L-methionine + A + S-adenosyl-L-homocysteine + 2 H(+). In terms of biological role, catalyzes the methylthiolation of an aspartic acid residue of ribosomal protein uS12. This chain is Ribosomal protein uS12 methylthiotransferase RimO, found in Elusimicrobium minutum (strain Pei191).